We begin with the raw amino-acid sequence, 389 residues long: Apoptosis inhibitor U19 (389 aa).

The protein belongs to the beta-herpesvirinae UL38 protein family. As to quaternary structure, interacts with host MDM2; this interaction leads to the stabilization of host TP53.

Its subcellular location is the host cytoplasm. It localises to the host nucleus. Plays a role in the inhibition of host apoptosis to facilitate efficient viral replication. Promotes stabilization and inactivation of host TP53 through interaction with host MDM2. The protein is Apoptosis inhibitor U19 (U19) of Human herpesvirus 6A (strain Uganda-1102) (HHV-6 variant A).